The following is a 253-amino-acid chain: Phycobilisome rod-core linker polypeptide CpcG4 (253 aa).

In terms of domain architecture, PBS-linker spans 11-191 (SSQNHRVTSF…DFQEKAGTVQ (181 aa)).

It belongs to the phycobilisome linker protein family. Part of the phycobilisome, a hemidiscoidal structure that is composed of two distinct substructures: a core complex and a number of rods radiating from the core.

The protein resides in the cellular thylakoid membrane. Rod-core linker protein required for attachment of phycocyanin to allophycocyanin in cores of phycobilisomes. In terms of biological role, linker polypeptides determine the state of aggregation and the location of the disk-shaped phycobiliprotein units within the phycobilisome and modulate their spectroscopic properties in order to mediate a directed and optimal energy transfer. The chain is Phycobilisome rod-core linker polypeptide CpcG4 from Nostoc sp. (strain PCC 7120 / SAG 25.82 / UTEX 2576).